Here is a 307-residue protein sequence, read N- to C-terminus: F-box protein At2g23160 (307 aa).

The 48-residue stretch at 2-49 folds into the F-box domain; sequence NSSSPISIDLIAEILSRVPSKSVARFRCVSKPWASMIRRPYFTELFLT.

This chain is F-box protein At2g23160, found in Arabidopsis thaliana (Mouse-ear cress).